The following is a 743-amino-acid chain: 1,4-alpha-glucan branching enzyme GlgB 2 (743 aa).

A disordered region spans residues methionine 1–serine 23. Residue aspartate 422 is the Nucleophile of the active site. Residue glutamate 475 is the Proton donor of the active site.

This sequence belongs to the glycosyl hydrolase 13 family. GlgB subfamily. Monomer.

The enzyme catalyses Transfers a segment of a (1-&gt;4)-alpha-D-glucan chain to a primary hydroxy group in a similar glucan chain.. It functions in the pathway glycan biosynthesis; glycogen biosynthesis. Catalyzes the formation of the alpha-1,6-glucosidic linkages in glycogen by scission of a 1,4-alpha-linked oligosaccharide from growing alpha-1,4-glucan chains and the subsequent attachment of the oligosaccharide to the alpha-1,6 position. The polypeptide is 1,4-alpha-glucan branching enzyme GlgB 2 (Xanthomonas euvesicatoria pv. vesicatoria (strain 85-10) (Xanthomonas campestris pv. vesicatoria)).